A 250-amino-acid polypeptide reads, in one-letter code: Large ribosomal subunit protein uL4 (250 aa).

Disordered regions lie at residues 1-20 (MQVTVRDLDGDDAGTLDLPR) and 51-101 (YAGL…HGLD). Residues 92-101 (PKAEKDHGLD) show a composition bias toward basic and acidic residues.

Belongs to the universal ribosomal protein uL4 family. Part of the 50S ribosomal subunit.

Its function is as follows. One of the primary rRNA binding proteins, this protein initially binds near the 5'-end of the 23S rRNA. It is important during the early stages of 50S assembly. It makes multiple contacts with different domains of the 23S rRNA in the assembled 50S subunit and ribosome. Functionally, forms part of the polypeptide exit tunnel. This is Large ribosomal subunit protein uL4 from Halobacterium salinarum (strain ATCC 29341 / DSM 671 / R1).